The following is a 385-amino-acid chain: Prepilin peptidase EppA (385 aa).

A run of 10 helical transmembrane segments spans residues 1-21, 29-49, 58-78, 80-100, 104-124, 126-146, 166-186, 187-207, 231-251, and 358-378; these read MILM…CFYA, GIIP…LNGA, WIFI…YILW, MVAW…LLPF, LVSY…PFPL, VIIN…FFII, TSMV…LITD, FLPF…TMVI, FELT…IQLI, and PAIF…MILF.

The protein belongs to the peptidase A24 family.

The protein localises to the cell membrane. In terms of biological role, peptidase that processes the N-terminus of prepilins. This is Prepilin peptidase EppA from Methanothermobacter thermautotrophicus (strain ATCC 29096 / DSM 1053 / JCM 10044 / NBRC 100330 / Delta H) (Methanobacterium thermoautotrophicum).